A 187-amino-acid chain; its full sequence is Ponticulin-like protein K (187 aa).

The signal sequence occupies residues 1-19 (MKNLILLFLLISIINLIQS). Asn31, Asn70, Asn86, Asn93, Asn119, Asn128, Asn146, Asn160, and Asn161 each carry an N-linked (GlcNAc...) asparagine glycan. Residues 115 to 146 (PSPSNSSNPSPSPNTTSSSSLSSSSLNSNEPN) show a composition bias toward low complexity. The interval 115 to 161 (PSPSNSSNPSPSPNTTSSSSLSSSSLNSNEPNQTTKPPKTNEPQKNN) is disordered. A compositionally biased stretch (polar residues) spans 147-161 (QTTKPPKTNEPQKNN). The GPI-like-anchor amidated asparagine moiety is linked to residue Asn161. Residues 162 to 187 (STSNIPNFFAIFGFLVLIIFILGDKI) constitute a propeptide, removed in mature form.

The protein belongs to the ponticulin family. Post-translationally, the GPI-like-anchor contains a phosphoceramide group, rather than a phosphatidyl group.

The protein resides in the cell membrane. Binds F-actin and nucleates actin assembly. This is Ponticulin-like protein K (ponK) from Dictyostelium discoideum (Social amoeba).